The primary structure comprises 1317 residues: uncharacterized protein (1317 aa).

The protein belongs to the oxoprolinase family.

This is an uncharacterized protein from Schizosaccharomyces pombe (strain 972 / ATCC 24843) (Fission yeast).